The chain runs to 345 residues: Phosphoribosylformylglycinamidine cyclo-ligase (345 aa).

The protein belongs to the AIR synthase family.

The protein resides in the cytoplasm. It carries out the reaction 2-formamido-N(1)-(5-O-phospho-beta-D-ribosyl)acetamidine + ATP = 5-amino-1-(5-phospho-beta-D-ribosyl)imidazole + ADP + phosphate + H(+). It functions in the pathway purine metabolism; IMP biosynthesis via de novo pathway; 5-amino-1-(5-phospho-D-ribosyl)imidazole from N(2)-formyl-N(1)-(5-phospho-D-ribosyl)glycinamide: step 2/2. The chain is Phosphoribosylformylglycinamidine cyclo-ligase from Cronobacter sakazakii (strain ATCC BAA-894) (Enterobacter sakazakii).